Here is a 249-residue protein sequence, read N- to C-terminus: 3alpha-hydroxy bile acid-CoA-ester 3-dehydrogenase 1/3 (249 aa).

NAD(+)-binding positions include 15–18 (TRGI), Glu-38, Glu-42, and Asn-92. Ser-144 contributes to the substrate binding site. Catalysis depends on proton donor/acceptor residues Tyr-157 and Lys-161. Residues Lys-161 and 190 to 192 (VDT) each bind NAD(+).

It belongs to the short-chain dehydrogenases/reductases (SDR) family. As to quaternary structure, homotetramer.

It catalyses the reaction a 3alpha-hydroxy bile acid CoA + NAD(+) = a 3-oxo bile acid CoA + NADH + H(+). The enzyme catalyses choloyl-CoA + NAD(+) = 7alpha,12alpha-dihydroxy-3-oxochol-24-oyl-CoA + NADH + H(+). The catalysed reaction is chenodeoxycholoyl-CoA + NAD(+) = 7alpha-hydroxy-3-oxochol-24-oyl-CoA + NADH + H(+). It carries out the reaction deoxycholoyl-CoA + NAD(+) = 12alpha-hydroxy-3-oxocholan-24-oyl-CoA + NADH + H(+). It catalyses the reaction lithocholoyl-CoA + NAD(+) = 3-oxocholan-24-oyl-CoA + NADH + H(+). It functions in the pathway lipid metabolism; bile acid biosynthesis. Functionally, involved in the multi-step bile acid 7alpha-dehydroxylation pathway that transforms primary bile acids to secondary bile acids in the human gut. Catalyzes the oxidation of C3-hydroxyl group of CoA conjugated bile acids generating a C3-oxo bile acid intermediate. Can use choloyl-CoA, chenodeoxycholoyl-CoA, deoxycholoyl-CoA, and lithocholoyl-CoA as substrates with similar efficiency. Highly prefers NAD over NADP as cosubstrate. Also catalyzes the reverse reactions; in vitro, the preferred direction of reaction depends on the pH. Has very little activity with unconjugated (non-CoA) bile acid substrates. The sequence is that of 3alpha-hydroxy bile acid-CoA-ester 3-dehydrogenase 1/3 (baiA1) from Clostridium scindens (strain JCM 10418 / VPI 12708).